Reading from the N-terminus, the 342-residue chain is Holliday junction branch migration complex subunit RuvB (342 aa).

The segment at 1–181 is large ATPase domain (RuvB-L); the sequence is MENRMVTPFD…FGMLCAMEFY (181 aa). Residues leucine 20, arginine 21, glycine 62, lysine 65, threonine 66, threonine 67, 128–130, arginine 171, tyrosine 181, and arginine 218 each bind ATP; that span reads EDY. Mg(2+) is bound at residue threonine 66. Positions 182-252 are small ATPAse domain (RuvB-S); that stretch reads TDEELMEIVV…GAKAALDLLE (71 aa). Residues 255-342 form a head domain (RuvB-H) region; it reads KEGLDKIDNK…KDNQVSIFNK (88 aa). Positions 310 and 315 each coordinate DNA.

It belongs to the RuvB family. Homohexamer. Forms an RuvA(8)-RuvB(12)-Holliday junction (HJ) complex. HJ DNA is sandwiched between 2 RuvA tetramers; dsDNA enters through RuvA and exits via RuvB. An RuvB hexamer assembles on each DNA strand where it exits the tetramer. Each RuvB hexamer is contacted by two RuvA subunits (via domain III) on 2 adjacent RuvB subunits; this complex drives branch migration. In the full resolvosome a probable DNA-RuvA(4)-RuvB(12)-RuvC(2) complex forms which resolves the HJ.

The protein resides in the cytoplasm. It carries out the reaction ATP + H2O = ADP + phosphate + H(+). Functionally, the RuvA-RuvB-RuvC complex processes Holliday junction (HJ) DNA during genetic recombination and DNA repair, while the RuvA-RuvB complex plays an important role in the rescue of blocked DNA replication forks via replication fork reversal (RFR). RuvA specifically binds to HJ cruciform DNA, conferring on it an open structure. The RuvB hexamer acts as an ATP-dependent pump, pulling dsDNA into and through the RuvAB complex. RuvB forms 2 homohexamers on either side of HJ DNA bound by 1 or 2 RuvA tetramers; 4 subunits per hexamer contact DNA at a time. Coordinated motions by a converter formed by DNA-disengaged RuvB subunits stimulates ATP hydrolysis and nucleotide exchange. Immobilization of the converter enables RuvB to convert the ATP-contained energy into a lever motion, pulling 2 nucleotides of DNA out of the RuvA tetramer per ATP hydrolyzed, thus driving DNA branch migration. The RuvB motors rotate together with the DNA substrate, which together with the progressing nucleotide cycle form the mechanistic basis for DNA recombination by continuous HJ branch migration. Branch migration allows RuvC to scan DNA until it finds its consensus sequence, where it cleaves and resolves cruciform DNA. The sequence is that of Holliday junction branch migration complex subunit RuvB from Clostridium botulinum (strain 657 / Type Ba4).